The following is a 285-amino-acid chain: Methyltransferase grgD (285 aa).

It belongs to the methyltransferase superfamily. LaeA methyltransferase family.

It participates in secondary metabolite biosynthesis. Methyltransferase; part of the gene cluster that mediates the biosynthesis of gregatin A, a fungal polyketide featuring an alkylated furanone core. The PKS grgA synthesizes C11 and C4 polyketide chains in the presence and absence of the trans-enoyl reductase grgB, respectively. The polyketide transferase grgF is then responsible for the fusion of the two carbon chains to produce the furanone skeleton of gregatin A. Next, the cytochrome P450 monooxygenase grgG accepts performs the oxidative cyclization to furnish the gregatin scaffold and leads to the formation of desmethylgregatin A. Finally, the O-methyltransferase grgD methylates the carboxyl group of desmethylgregatin A to provide gregatin A. The chain is Methyltransferase grgD from Penicillium sp.